The sequence spans 301 residues: Putative MgpC-like protein MPN_093 (301 aa).

It belongs to the MgpC family.

In Mycoplasma pneumoniae (strain ATCC 29342 / M129 / Subtype 1) (Mycoplasmoides pneumoniae), this protein is Putative MgpC-like protein MPN_093.